The sequence spans 247 residues: Cell division protein ZapD (247 aa).

It belongs to the ZapD family. In terms of assembly, interacts with FtsZ.

The protein localises to the cytoplasm. In terms of biological role, cell division factor that enhances FtsZ-ring assembly. Directly interacts with FtsZ and promotes bundling of FtsZ protofilaments, with a reduction in FtsZ GTPase activity. The protein is Cell division protein ZapD of Salmonella dublin (strain CT_02021853).